Consider the following 308-residue polypeptide: Ycf92-like protein (308 aa).

5 consecutive transmembrane segments (helical) span residues 41–61, 75–95, 153–173, 192–212, and 288–308; these read FANNLWRILLVALLILFTLIA, LLTLSFFVLAIAAISPDGLGV, ISTIIFTVIYSTNLYLLTTAP, IPVTEITLTLTLSLRFIPLVL, and WLAIASLTIFWGIRVVFGNQI.

Belongs to the ycf92 family.

It is found in the membrane. The protein is Ycf92-like protein of Nostoc sp. (strain PCC 7120 / SAG 25.82 / UTEX 2576).